The chain runs to 117 residues: Ribosome-binding factor A (117 aa).

Belongs to the RbfA family. As to quaternary structure, monomer. Binds 30S ribosomal subunits, but not 50S ribosomal subunits or 70S ribosomes.

It is found in the cytoplasm. Functionally, one of several proteins that assist in the late maturation steps of the functional core of the 30S ribosomal subunit. Associates with free 30S ribosomal subunits (but not with 30S subunits that are part of 70S ribosomes or polysomes). Required for efficient processing of 16S rRNA. May interact with the 5'-terminal helix region of 16S rRNA. The sequence is that of Ribosome-binding factor A from Leuconostoc mesenteroides subsp. mesenteroides (strain ATCC 8293 / DSM 20343 / BCRC 11652 / CCM 1803 / JCM 6124 / NCDO 523 / NBRC 100496 / NCIMB 8023 / NCTC 12954 / NRRL B-1118 / 37Y).